The primary structure comprises 447 residues: UDP-N-acetylmuramate--L-alanine ligase (447 aa).

Residue 107–113 (GTHGKTT) participates in ATP binding.

The protein belongs to the MurCDEF family.

Its subcellular location is the cytoplasm. The catalysed reaction is UDP-N-acetyl-alpha-D-muramate + L-alanine + ATP = UDP-N-acetyl-alpha-D-muramoyl-L-alanine + ADP + phosphate + H(+). The protein operates within cell wall biogenesis; peptidoglycan biosynthesis. Cell wall formation. The polypeptide is UDP-N-acetylmuramate--L-alanine ligase (Rubrobacter xylanophilus (strain DSM 9941 / JCM 11954 / NBRC 16129 / PRD-1)).